The primary structure comprises 275 residues: MASSNLLSLALFLVLLTHANSASQTSFSFQRFNETNLILQRDATVSSKGQLRLTNVNDNGEPTLSSLGRAFYSAPIQIWDNTTGAVAASPTSFTFNIDVPNNSGPADGLAFVLLPVGSQPKDKGGLLGLFNNYKYDSNAHTVAVEFDTLYNVHWDPKPRHIGIDVNSIKSIKTTTWDFVKGENAEVLITYDSSTKLLVASLVYPSLKTSFIVSDTVDLKSVLPEWVIVGFTATTGITKGNVETNDILSWSFASKLSDGTTSEALNLANFALNQIL.

The N-terminal stretch at 1 to 21 is a signal peptide; it reads MASSNLLSLALFLVLLTHANS. Asn-33 is a glycosylation site (N-linked (GlcNAc...) (high mannose) asparagine). 2 N-linked (GlcNAc...) asparagine glycosylation sites follow: Asn-81 and Asn-101.

This sequence belongs to the leguminous lectin family.

This insecticidal carbohydrate-binding lectin is toxic for the cowpea weevil. In Phaseolus vulgaris (Kidney bean), this protein is Erythroagglutinating phytohemagglutinin (DLEC1).